The following is a 380-amino-acid chain: Protein RecA (380 aa).

Residue 65–72 participates in ATP binding; sequence GPESSGKT. Positions 329–380 are disordered; sequence DATGEETSETDDQAKEAKDKGTAKNGSKGQSKSTKATPAETALDLGDQPTEK. Residues 340–350 are compositionally biased toward basic and acidic residues; sequence DQAKEAKDKGT. Residues 352–364 are compositionally biased toward polar residues; the sequence is KNGSKGQSKSTKA.

It belongs to the RecA family.

Its subcellular location is the cytoplasm. Its function is as follows. Can catalyze the hydrolysis of ATP in the presence of single-stranded DNA, the ATP-dependent uptake of single-stranded DNA by duplex DNA, and the ATP-dependent hybridization of homologous single-stranded DNAs. It interacts with LexA causing its activation and leading to its autocatalytic cleavage. The chain is Protein RecA from Lactiplantibacillus plantarum (strain ATCC BAA-793 / NCIMB 8826 / WCFS1) (Lactobacillus plantarum).